Reading from the N-terminus, the 277-residue chain is Ribosomal RNA small subunit methyltransferase A (277 aa).

S-adenosyl-L-methionine is bound by residues Asn-27, Leu-29, Gly-54, Glu-75, Asp-95, and Asn-118.

The protein belongs to the class I-like SAM-binding methyltransferase superfamily. rRNA adenine N(6)-methyltransferase family. RsmA subfamily.

The protein localises to the cytoplasm. The enzyme catalyses adenosine(1518)/adenosine(1519) in 16S rRNA + 4 S-adenosyl-L-methionine = N(6)-dimethyladenosine(1518)/N(6)-dimethyladenosine(1519) in 16S rRNA + 4 S-adenosyl-L-homocysteine + 4 H(+). In terms of biological role, specifically dimethylates two adjacent adenosines (A1518 and A1519) in the loop of a conserved hairpin near the 3'-end of 16S rRNA in the 30S particle. May play a critical role in biogenesis of 30S subunits. The polypeptide is Ribosomal RNA small subunit methyltransferase A (Chlamydia trachomatis serovar L2 (strain ATCC VR-902B / DSM 19102 / 434/Bu)).